Consider the following 63-residue polypeptide: DNA-directed RNA polymerase 7 kDa subunit (63 aa).

It belongs to the poxviridae DNA-directed RNA polymerase 7 kDa subunit family. In terms of assembly, the DNA-dependent RNA polymerase used for intermediate and late genes expression consists of eight subunits 147 kDa, 133 kDa, 35 kDa, 30 kDa, 22 kDa, 19 kDa, 18 kDa and 7 kDa totalling more than 500 kDa in mass. The same holoenzyme, with the addition of the transcription-specificity factor RAP94, is used for early gene expression.

The protein resides in the virion. The catalysed reaction is RNA(n) + a ribonucleoside 5'-triphosphate = RNA(n+1) + diphosphate. Its function is as follows. Part of the DNA-dependent RNA polymerase which catalyzes the transcription of viral DNA into RNA using the four ribonucleoside triphosphates as substrates. Responsible for the transcription of early, intermediate and late genes. DNA-dependent RNA polymerase associates with the early transcription factor (ETF) thereby allowing the early genes transcription. Late transcription, and probably also intermediate transcription, require newly synthesized RNA polymerase. The polypeptide is DNA-directed RNA polymerase 7 kDa subunit (RPO7) (Molluscum contagiosum virus subtype 1 (MOCV)).